We begin with the raw amino-acid sequence, 348 residues long: MSDDKSKALAAALAQIEKSFGKGAIMKMDGSQQEENLEVISTGSLGLDLALGVGGLPRGRIVEIFGPESSGKTTLCLEAVAQCQKNGGVCAFVDAEHAFDPVYARKLGVKVEELYLSQPDTGEQALEICDTLVRSGGIDMVVVDSVAALVPKAEIEGDMGDSHVGLQARLMSQALRKLTGHIKKTNTLVVFINQIRMKIGVMFGSPETTTGGNALKFYSSVRLDIRRTGSIKKGEEVLGNETRVKVIKNKVAPPFRQAEFDILYGEGISWEGELIDIGVKNDIINKSGAWYSYNGAKIGQGKDNVRVWLKENPEVADEIDAKIRALNGVEMHITEGTQDETDGERPEE.

66–73 (GPESSGKT) serves as a coordination point for ATP.

It belongs to the RecA family.

The protein localises to the cytoplasm. In terms of biological role, can catalyze the hydrolysis of ATP in the presence of single-stranded DNA, the ATP-dependent uptake of single-stranded DNA by duplex DNA, and the ATP-dependent hybridization of homologous single-stranded DNAs. It interacts with LexA causing its activation and leading to its autocatalytic cleavage. The sequence is that of Protein RecA from Neisseria meningitidis serogroup A / serotype 4A (strain DSM 15465 / Z2491).